We begin with the raw amino-acid sequence, 207 residues long: Ribonuclease HII (207 aa).

The RNase H type-2 domain maps to 5-207; that stretch reads PLIIGVDEAG…APVRALLRPC (203 aa). The a divalent metal cation site is built by aspartate 11, glutamate 12, and aspartate 117.

Belongs to the RNase HII family. It depends on Mn(2+) as a cofactor. The cofactor is Mg(2+).

The protein resides in the cytoplasm. The catalysed reaction is Endonucleolytic cleavage to 5'-phosphomonoester.. Its function is as follows. Endonuclease that specifically degrades the RNA of RNA-DNA hybrids. The polypeptide is Ribonuclease HII (Hyphomonas neptunium (strain ATCC 15444)).